The primary structure comprises 156 residues: Probable chemoreceptor glutamine deamidase CheD (156 aa).

It belongs to the CheD family.

The catalysed reaction is L-glutaminyl-[protein] + H2O = L-glutamyl-[protein] + NH4(+). In terms of biological role, probably deamidates glutamine residues to glutamate on methyl-accepting chemotaxis receptors (MCPs), playing an important role in chemotaxis. This is Probable chemoreceptor glutamine deamidase CheD from Bdellovibrio bacteriovorus (strain ATCC 15356 / DSM 50701 / NCIMB 9529 / HD100).